Reading from the N-terminus, the 221-residue chain is Carbonic anhydrase (221 aa).

Positions 57, 59, 112, and 115 each coordinate Zn(2+).

The protein belongs to the beta-class carbonic anhydrase family. Requires Zn(2+) as cofactor.

Its subcellular location is the cytoplasm. It localises to the nucleus. The protein resides in the mitochondrion intermembrane space. It catalyses the reaction hydrogencarbonate + H(+) = CO2 + H2O. Functionally, catalyzes the reversible hydration of CO(2) to H(2)CO(3). The main role may be to provide inorganic carbon for the bicarbonate-dependent carboxylation reactions catalyzed by pyruvate carboxylase, acetyl-CoA carboxylase and carbamoyl-phosphate synthetase. Involved in protection against oxidative damage. Encodes a substrate for the non-classical protein export pathway for proteins that lack a cleavable signal sequence. The chain is Carbonic anhydrase (NCE103) from Saccharomyces cerevisiae (strain ATCC 204508 / S288c) (Baker's yeast).